A 322-amino-acid polypeptide reads, in one-letter code: Solute carrier family 35 member B1 (322 aa).

8 helical membrane passes run 12–32, 51–71, 85–105, 136–156, 168–188, 210–230, 243–263, and 285–305; these read LRLPLCFLGVFVCYFYYGILQ, FALTLVFIQCVINAMFAKILI, WLYAACSVSYVGAMVSSNSAL, YPLAKYLCVLLIVAGVALFMY, TVGFGELLLLLSLTLDGLTGV, LWSTVLLGAGILFTGELWEFL, ILLFGLTSALGQSFIFMTVVY, and VILFANPISSMQWVGTVLVFL. The Di-lysine motif signature appears at 318-322; the sequence is KKTSH.

Belongs to the nucleotide-sugar transporter family. SLC35B subfamily.

Its subcellular location is the endoplasmic reticulum membrane. It carries out the reaction ADP(in) + ATP(out) = ADP(out) + ATP(in). The catalysed reaction is UDP(out) + ATP(in) = UDP(in) + ATP(out). It catalyses the reaction UTP(out) + ATP(in) = UTP(in) + ATP(out). The enzyme catalyses dATP(out) + ATP(in) = dATP(in) + ATP(out). ATP:ADP antiporter that catalyzes the exchange of ATP and ADP across the endoplasmic reticulum (ER) membrane. Imports ATP from the cytosol to the ER lumen and exports ADP in the opposite direction. Regulates ER energy metabolism and protein biogenesis. Appears to be part of a calcium-dependent ER to cytosol low energy response axis, where calcium efflux from ER to the cytosol triggers ATP import into the ER lumen to maintain sufficient ATP supply. Provides ATP to ER chaperone HSPA5 that drives protein folding and trafficking in the ER. Can transport dATP, UTP or UDP in exchange for ATP, but the physiological relevance of this process remains to be established. This chain is Solute carrier family 35 member B1 (Slc35b1), found in Rattus norvegicus (Rat).